A 202-amino-acid polypeptide reads, in one-letter code: GTP-binding protein rho1 (202 aa).

13–20 (GDGACGKT) is a binding site for GTP. An Effector region motif is present at residues 35–43 (YVPTVFENY). GTP is bound by residues 60 to 64 (DTAGQ) and 118 to 121 (CKAD). A Cysteine methyl ester modification is found at C199. C199 carries the S-geranylgeranyl cysteine lipid modification. Residues 200-202 (ILL) constitute a propeptide, removed in mature form.

Belongs to the small GTPase superfamily. Rho family.

The protein localises to the cell membrane. In terms of biological role, involved in the regulation of cell wall growth and actin cytoskeleton organization. Activates (1,3)-beta-D-glucan synthase. The sequence is that of GTP-binding protein rho1 (rho1) from Schizosaccharomyces pombe (strain 972 / ATCC 24843) (Fission yeast).